The following is a 637-amino-acid chain: 3D-(3,5/4)-trihydroxycyclohexane-1,2-dione hydrolase (637 aa).

Glu66 serves as a coordination point for thiamine diphosphate. Residues 442-522 (SLPGDLQRLW…INVLLFDNSG (81 aa)) are thiamine pyrophosphate binding. Mg(2+) is bound by residues Asp493 and Asn520.

It belongs to the TPP enzyme family. It depends on Mg(2+) as a cofactor. Thiamine diphosphate serves as cofactor.

The catalysed reaction is 3D-3,5/4-trihydroxycyclohexane-1,2-dione + H2O = 5-deoxy-D-glucuronate + H(+). It functions in the pathway polyol metabolism; myo-inositol degradation into acetyl-CoA; acetyl-CoA from myo-inositol: step 3/7. In terms of biological role, involved in the cleavage of the C1-C2 bond of 3D-(3,5/4)-trihydroxycyclohexane-1,2-dione (THcHDO) to yield 5-deoxy-glucuronate (5DG). The polypeptide is 3D-(3,5/4)-trihydroxycyclohexane-1,2-dione hydrolase (Bacillus velezensis (strain DSM 23117 / BGSC 10A6 / LMG 26770 / FZB42) (Bacillus amyloliquefaciens subsp. plantarum)).